The chain runs to 212 residues: Thymidylate kinase (212 aa).

Ala2 carries the N-acetylalanine modification. Residues 16-21 and Arg97 each bind ATP; that span reads RAGKST. Positions 133–157 are LID; it reads LQLQLADAAKRGAFGHERYENGAFQ. N6-acetyllysine is present on Lys169. ATP contacts are provided by Lys182 and Arg192.

This sequence belongs to the thymidylate kinase family. Homodimer. Mg(2+) serves as cofactor.

The catalysed reaction is dTMP + ATP = dTDP + ADP. The protein operates within pyrimidine metabolism; dTTP biosynthesis. Its function is as follows. Catalyzes the phosphorylation of thymidine monophosphate (dTMP) to thymidine diphosphate (dTDP), the immediate precursor for the DNA building block dTTP, with ATP as the preferred phosphoryl donor in the presence of Mg(2+). This Homo sapiens (Human) protein is Thymidylate kinase (DTYMK).